We begin with the raw amino-acid sequence, 444 residues long: Probable glycine dehydrogenase (decarboxylating) subunit 1 (444 aa).

The protein belongs to the GcvP family. N-terminal subunit subfamily. As to quaternary structure, the glycine cleavage system is composed of four proteins: P, T, L and H. In this organism, the P 'protein' is a heterodimer of two subunits.

It carries out the reaction N(6)-[(R)-lipoyl]-L-lysyl-[glycine-cleavage complex H protein] + glycine + H(+) = N(6)-[(R)-S(8)-aminomethyldihydrolipoyl]-L-lysyl-[glycine-cleavage complex H protein] + CO2. Its function is as follows. The glycine cleavage system catalyzes the degradation of glycine. The P protein binds the alpha-amino group of glycine through its pyridoxal phosphate cofactor; CO(2) is released and the remaining methylamine moiety is then transferred to the lipoamide cofactor of the H protein. This chain is Probable glycine dehydrogenase (decarboxylating) subunit 1, found in Chlorobium phaeobacteroides (strain DSM 266 / SMG 266 / 2430).